A 185-amino-acid polypeptide reads, in one-letter code: Peroxynitrite isomerase (185 aa).

The tract at residues 1 to 21 is disordered; sequence MHHPARELPFPDALRPGARPA. The short motif at 34-40 is the GXWXGXG element; the sequence is GTWRGTG. Residue His171 participates in heme b binding.

It belongs to the nitrobindin family. As to quaternary structure, homodimer. It depends on heme b as a cofactor.

The enzyme catalyses peroxynitrite = nitrate. Its pathway is nitrogen metabolism. In terms of biological role, heme-binding protein able to scavenge peroxynitrite and to protect free L-tyrosine against peroxynitrite-mediated nitration, by acting as a peroxynitrite isomerase that converts peroxynitrite to nitrate. Therefore, this protein likely plays a role in peroxynitrite sensing and in the detoxification of reactive nitrogen and oxygen species (RNS and ROS, respectively). Is able to bind nitric oxide (NO) in vitro, but may act as a sensor of peroxynitrite levels in vivo. The protein is Peroxynitrite isomerase of Streptomyces griseus subsp. griseus (strain JCM 4626 / CBS 651.72 / NBRC 13350 / KCC S-0626 / ISP 5235).